A 158-amino-acid polypeptide reads, in one-letter code: Large ribosomal subunit protein uL13 (158 aa).

The protein belongs to the universal ribosomal protein uL13 family. Part of the 50S ribosomal subunit.

Its function is as follows. This protein is one of the early assembly proteins of the 50S ribosomal subunit, although it is not seen to bind rRNA by itself. It is important during the early stages of 50S assembly. This chain is Large ribosomal subunit protein uL13, found in Rickettsia canadensis (strain McKiel).